Consider the following 161-residue polypeptide: Phenolic acid decarboxylase PadC (161 aa).

Residues Tyr-11 and Tyr-13 each coordinate substrate. Catalysis depends on Tyr-19, which acts as the Proton donor. Arg-41 is a binding site for substrate. Catalysis depends on Glu-64, which acts as the Proton acceptor.

It belongs to the PadC family. As to quaternary structure, homodimer.

The enzyme catalyses (E)-4-coumarate + H(+) = 4-vinylphenol + CO2. The catalysed reaction is (E)-cinnamate + H(+) = styrene + CO2. It carries out the reaction (E)-ferulate + H(+) = 2-methoxy-4-vinylphenol + CO2. Involved in the decarboxylation and detoxification of phenolic derivatives. It is able to catalyze the decarboxylation of ferulic, p-coumaric and caffeic acids. This is Phenolic acid decarboxylase PadC (padC) from Bacillus subtilis (strain 168).